A 476-amino-acid polypeptide reads, in one-letter code: Protein transport protein Sec61 subunit alpha isoform A (476 aa).

The Cytoplasmic portion of the chain corresponds to 2-33; it reads GIKFLEVIKPFCAVLPEIQKPERKIQFREKVL. The chain crosses the membrane as a helical span at residues 34–53; the sequence is WTAITLFIFLVCCQIPLFGI. Topologically, residues 54–76 are lumenal; it reads MSSDSADPFYWMRVILASNRGTL. The helical transmembrane segment at 77–96 threads the bilayer; the sequence is MELGISPIVTSGLIMQLLAG. At 97–117 the chain is on the cytoplasmic side; sequence AKIIEVGDTPKDRALFNGAQK. A helical transmembrane segment spans residues 118–138; the sequence is LFGMIITIGQSIVYVMTGMYG. Over 139–144 the chain is Lumenal; it reads DPSEMG. A helical transmembrane segment spans residues 145 to 165; the sequence is AGICLLIIIQLFVAGLIVLLL. The Cytoplasmic segment spans residues 166-172; it reads DELLQKG. Residues 173 to 193 form a helical membrane-spanning segment; that stretch reads YGLGSGISLFIATNICETIVW. Residues 194-240 are Lumenal-facing; sequence KAFSPTTVNTGRGTEFEGAIIALFHLLATRTDKVRALREAFYRQNLP. Residues 241 to 261 traverse the membrane as a helical segment; the sequence is NLLNLIATVFVFAVVIYFQGF. At 262 to 288 the chain is on the cytoplasmic side; that stretch reads RVDLPIKSARYRGQYNTYPIKLFYTSN. The chain crosses the membrane as a helical span at residues 289 to 309; that stretch reads IPIILQSALVSNLYVISQMLS. Over 310–354 the chain is Lumenal; that stretch reads TRFSGNFLVNLLGTWSDTSTGGPARAYPVGGLCYFLSPPESFGSV. Residues 355–375 traverse the membrane as a helical segment; that stretch reads LDDPIHAAIYIVFMLGSCAFF. Topologically, residues 376-420 are cytoplasmic; sequence SKTWIEVSGSSAKDVAKQLKEQQMVMGGHRETSMVHELNRYIPTA. The helical transmembrane segment at 421-441 threads the bilayer; that stretch reads AAFGGLCIGGLSVMADFLGAI. The Lumenal portion of the chain corresponds to 442–445; it reads GSGT. The helical transmembrane segment at 446–462 threads the bilayer; the sequence is GILLAVTIIYQYFEIFV. Residues 463–476 lie on the Cytoplasmic side of the membrane; sequence KEQSEMGSMGALLF.

The protein belongs to the SecY/SEC61-alpha family. The SEC61 channel-forming translocon complex consists of channel-forming core components SEC61A1, SEC61B and SEC61G and different auxiliary components such as SEC62 and SEC63. The SEC61 channel associates with the multi-pass translocon (MPT) complex.

Its subcellular location is the endoplasmic reticulum membrane. In terms of biological role, component of SEC61 channel-forming translocon complex that mediates transport of signal peptide-containing precursor polypeptides across the endoplasmic reticulum (ER). Forms a ribosome receptor and a gated pore in the ER membrane, both functions required for cotranslational translocation of nascent polypeptides. May cooperate with auxiliary protein SEC62, SEC63 and HSPA5/BiP to enable post-translational transport of small presecretory proteins. The SEC61 channel is also involved in ER membrane insertion of transmembrane proteins: it mediates membrane insertion of the first few transmembrane segments of proteins, while insertion of subsequent transmembrane regions of multi-pass membrane proteins is mediated by the multi-pass translocon (MPT) complex. In Oncorhynchus mykiss (Rainbow trout), this protein is Protein transport protein Sec61 subunit alpha isoform A (sec61aa).